A 242-amino-acid polypeptide reads, in one-letter code: uncharacterized protein (242 aa).

The HTH gntR-type domain maps to 17-85 (QRVDERIATT…HGSGSVVRDP (69 aa)). Residues 45 to 64 (ERDLAERLGVNRTSLRQGLA) constitute a DNA-binding region (H-T-H motif).

This is an uncharacterized protein from Mycobacterium tuberculosis (strain ATCC 25618 / H37Rv).